Reading from the N-terminus, the 196-residue chain is Peptidyl-tRNA hydrolase (196 aa).

Y14 serves as a coordination point for tRNA. H19 functions as the Proton acceptor in the catalytic mechanism. TRNA-binding residues include Y64, N66, and N112.

It belongs to the PTH family. Monomer.

The protein localises to the cytoplasm. The enzyme catalyses an N-acyl-L-alpha-aminoacyl-tRNA + H2O = an N-acyl-L-amino acid + a tRNA + H(+). Functionally, hydrolyzes ribosome-free peptidyl-tRNAs (with 1 or more amino acids incorporated), which drop off the ribosome during protein synthesis, or as a result of ribosome stalling. Catalyzes the release of premature peptidyl moieties from peptidyl-tRNA molecules trapped in stalled 50S ribosomal subunits, and thus maintains levels of free tRNAs and 50S ribosomes. This Methylocella silvestris (strain DSM 15510 / CIP 108128 / LMG 27833 / NCIMB 13906 / BL2) protein is Peptidyl-tRNA hydrolase.